The following is a 550-amino-acid chain: MQPPWGLALPLLLPWVTGGVGTSPWDYGLSALAHQPGVCQYGTKMACCYGWKRNNKGVCEAMCEPRCKFGECVGPNKCRCFPGYTGKTCTQDVNECGVKPRPCQHRCVNTHGSYKCFCLSGHMLLPDATCSNSRTCARLNCQYGCEDTEEGPRCVCPSSGLRLGPNGRVCLDIDECASSKAVCPSNRRCVNTFGSYYCKCHIGFELKYIGRRYDCVDINECALNTHPCSPHANCLNTRGSFKCKCKQGYRGNGLQCSVIPEHSVKEILTAPGTIKDRIKKLLAHKRTMKKKVKLKMVTPRPASTRVPKVNLPYSSEEGVSRGRNYDGEQKKKEEGKRERLEEEKGEKTLRNEVEQERTLRGDVFSPKVNEAEDLDLVYVQRKELNSKLKHKDLNISVDCSFDLGVCDWKQDREDDFDWHPADRDNDVGYYMAVPALAGHKKNIGRLKLLLPNLTPQSNFCLLFDYRLAGDKVGKLRVFVKNSNNALAWEETKNEDGRWRTGKIQLYQGIDTTKSVIFEAERGKGKTGEIAVDGVLLVSGLCPDDFLSVEG.

The first 18 residues, 1–18 (MQPPWGLALPLLLPWVTG), serve as a signal peptide directing secretion. Residues 55 to 90 (NKGVCEAMCEPRCKFGECVGPNKCRCFPGYTGKTCT) form the EGF-like 1 domain. Cystine bridges form between Cys-59-Cys-72, Cys-63-Cys-78, Cys-80-Cys-89, Cys-96-Cys-107, Cys-103-Cys-116, and Cys-118-Cys-130. Residues 92-131 (DVNECGVKPRPCQHRCVNTHGSYKCFCLSGHMLLPDATCS) enclose the EGF-like 2; calcium-binding domain. One can recognise an EGF-like 3 domain in the interval 135–171 (TCARLNCQYGCEDTEEGPRCVCPSSGLRLGPNGRVCL). The 39-residue stretch at 172-210 (DIDECASSKAVCPSNRRCVNTFGSYYCKCHIGFELKYIG) folds into the EGF-like 4; calcium-binding domain. Cystine bridges form between Cys-176–Cys-189, Cys-183–Cys-198, Cys-221–Cys-234, Cys-228–Cys-243, and Cys-245–Cys-256. Residues 217 to 257 (DINECALNTHPCSPHANCLNTRGSFKCKCKQGYRGNGLQCS) form the EGF-like 5; calcium-binding domain. The disordered stretch occupies residues 295–354 (KMVTPRPASTRVPKVNLPYSSEEGVSRGRNYDGEQKKKEEGKRERLEEEKGEKTLRNEVE). Basic and acidic residues predominate over residues 318–354 (GVSRGRNYDGEQKKKEEGKRERLEEEKGEKTLRNEVE). Positions 327-357 (GEQKKKEEGKRERLEEEKGEKTLRNEVEQER) form a coiled coil. N-linked (GlcNAc...) asparagine glycosylation is present at Asn-394. One can recognise an MAM domain in the interval 397–543 (VDCSFDLGVC…VLLVSGLCPD (147 aa)).

The protein belongs to the nephronectin family. In terms of tissue distribution, expressed at basement membrane of pelage follicles (at protein level).

The protein localises to the secreted. It localises to the extracellular space. It is found in the extracellular matrix. Its subcellular location is the basement membrane. Functionally, may bind integrin alpha-8/beta-1 and play a role in hair follicle morphogenesis. Promotes matrix assembly. In Mus musculus (Mouse), this protein is Epidermal growth factor-like protein 6 (Egfl6).